Consider the following 103-residue polypeptide: Large ribosomal subunit protein bL21 (103 aa).

The protein belongs to the bacterial ribosomal protein bL21 family. In terms of assembly, part of the 50S ribosomal subunit. Contacts protein L20.

In terms of biological role, this protein binds to 23S rRNA in the presence of protein L20. The chain is Large ribosomal subunit protein bL21 from Maridesulfovibrio salexigens (strain ATCC 14822 / DSM 2638 / NCIMB 8403 / VKM B-1763) (Desulfovibrio salexigens).